The following is a 163-amino-acid chain: Ribosome maturation factor RimM (163 aa).

Residues 90–161 (EGRHYWGDLE…VVVDPPEGLL (72 aa)) enclose the PRC barrel domain.

It belongs to the RimM family. As to quaternary structure, binds ribosomal protein uS19.

It is found in the cytoplasm. Its function is as follows. An accessory protein needed during the final step in the assembly of 30S ribosomal subunit, possibly for assembly of the head region. Essential for efficient processing of 16S rRNA. May be needed both before and after RbfA during the maturation of 16S rRNA. It has affinity for free ribosomal 30S subunits but not for 70S ribosomes. The polypeptide is Ribosome maturation factor RimM (Anaeromyxobacter dehalogenans (strain 2CP-C)).